Consider the following 448-residue polypeptide: Binary larvicide subunit BinB (448 aa).

The tract at residues 19-200 is beta-trefoil domain; sequence TNYPLNTTPT…FVNSSFYAAA (182 aa). A disulfide bridge links C67 with C161. The interval 226–407 is probable pore-forming domain; it reads PKDAVRAVKG…APITNPLTLT (182 aa).

It belongs to the toxin_10 family. Forms a heterodimer with BinA. In terms of processing, processed by proteases extracted from mosquito larval gut.

The protein localises to the spore. The protein resides in the perispore. Functionally, component of a binary toxin active against Culex and some Aedes mosquito larvae. This subunit is responsible for localized binding to specific regions of the host larval gut. The individual subunits are not toxic. BinAB and this subunit alone bind to the gastric caecum and posterior midgut of C.quinquefasciatus larvae. Binary toxin internalization into host gut cells requires both proteins. Does not bind to the midgut of Aedes aegypti. Toxic to Aedes atropalpus mosquito larvae; mortality towards both C.quinquefasciatus and A.atropalpus is maximal by 48 hours. A.aegypti is not very susceptible to this toxin. Binding component of binary toxin. The 51 kDa polypeptide acts synergetically with the 42 kDa polypeptide for expression of a larvicidal toxin. The chain is Binary larvicide subunit BinB from Lysinibacillus sphaericus (Bacillus sphaericus).